The primary structure comprises 511 residues: 2,3-bisphosphoglycerate-independent phosphoglycerate mutase (511 aa).

Asp-12 serves as a coordination point for Mn(2+). Tyr-36 is subject to Phosphotyrosine. A Mn(2+)-binding site is contributed by Ser-62. The Phosphoserine intermediate role is filled by Ser-62. Substrate contacts are provided by residues His-123, 153–154 (RD), Arg-185, Arg-191, 261–264 (RPDR), and Lys-336. 5 residues coordinate Mn(2+): Asp-403, His-407, Asp-444, His-445, and His-462.

The protein belongs to the BPG-independent phosphoglycerate mutase family. Monomer. Mn(2+) serves as cofactor.

It catalyses the reaction (2R)-2-phosphoglycerate = (2R)-3-phosphoglycerate. The protein operates within carbohydrate degradation; glycolysis; pyruvate from D-glyceraldehyde 3-phosphate: step 3/5. In terms of biological role, catalyzes the interconversion of 2-phosphoglycerate and 3-phosphoglycerate. The protein is 2,3-bisphosphoglycerate-independent phosphoglycerate mutase of Geobacillus thermodenitrificans (strain NG80-2).